The primary structure comprises 295 residues: MSSSRPVFRSRWLPYLLVAPQLIITVIFFIWPAGEALWYSLQSVDPFGFSSQFVGLDNFVTLFHDSYYLDSFWTTIKFSTFVTVSGLLVSLFFAALVEYIVRGSRFYQTLMLLPYAVAPAVAAVLWIFLFNPGRGLITHFLAEFGYDWNHAQNSGQAMFLVVFASVWKQISYNFLFFYAALQSIPRSLIEAAAIDGAGPIRRFFKIALPLIAPVSFFLLVVNLVYAFFDTFPVIDAATSGGPVQATTTLIYKIYREGFTGLDLASSAAQSMVLMFLVIVLTVVQFRYVESKVRYQ.

Topologically, residues 1 to 11 (MSSSRPVFRSR) are cytoplasmic. The chain crosses the membrane as a helical span at residues 12–32 (WLPYLLVAPQLIITVIFFIWP). The Periplasmic portion of the chain corresponds to 33 to 80 (AGEALWYSLQSVDPFGFSSQFVGLDNFVTLFHDSYYLDSFWTTIKFST). One can recognise an ABC transmembrane type-1 domain in the interval 76-284 (IKFSTFVTVS…FLVIVLTVVQ (209 aa)). The chain crosses the membrane as a helical span at residues 81–101 (FVTVSGLLVSLFFAALVEYIV). Over 102-109 (RGSRFYQT) the chain is Cytoplasmic. A helical transmembrane segment spans residues 110-130 (LMLLPYAVAPAVAAVLWIFLF). Residues 131-156 (NPGRGLITHFLAEFGYDWNHAQNSGQ) lie on the Periplasmic side of the membrane. Residues 157–177 (AMFLVVFASVWKQISYNFLFF) form a helical membrane-spanning segment. Topologically, residues 178–207 (YAALQSIPRSLIEAAAIDGAGPIRRFFKIA) are cytoplasmic. Residues 208 to 228 (LPLIAPVSFFLLVVNLVYAFF) form a helical membrane-spanning segment. At 229–262 (DTFPVIDAATSGGPVQATTTLIYKIYREGFTGLD) the chain is on the periplasmic side. A helical transmembrane segment spans residues 263 to 283 (LASSAAQSMVLMFLVIVLTVV). Residues 284–295 (QFRYVESKVRYQ) lie on the Cytoplasmic side of the membrane.

Belongs to the binding-protein-dependent transport system permease family. UgpAE subfamily. In terms of assembly, the complex is composed of two ATP-binding proteins (UgpC), two transmembrane proteins (UgpA and UgpE) and a solute-binding protein (UgpB).

Its subcellular location is the cell inner membrane. In terms of biological role, part of the ABC transporter complex UgpBAEC involved in sn-glycerol-3-phosphate (G3P) import. Probably responsible for the translocation of the substrate across the membrane. In Shigella flexneri, this protein is sn-glycerol-3-phosphate transport system permease protein UgpA (ugpA).